We begin with the raw amino-acid sequence, 498 residues long: METRSVKRKKKKKEEEANWFIRVDRISNLPDSLNHQILLLLPLKSAAQASLLSKRWRSLFLSLPDLDFTSINDLKNPKSFSSNSIYKVLSLRSHRDSNNLRSLRFRVPVTFTSLNSLIRLAVTHQVQDLDIEVTTKDYFNFPRWIVTSQNLRALTLKSANLGFRLPPSSSARGGFQKLTSLSLSRVILHNQPCLSDFFTDPSFPLLEKLTLECCFGLKELKVSCRLLQEFSLKNSLQLEGLEVSGNKLQKLKVESCFYSYSEKSFVKINTPNLKTFLWNSNAVTTSVHFLDKLVCLRKAFVKVFWHHQDLNSQIQSLFTLLSGLCHSYKLQLGNQSVEILSSKKGLLKNHLLPFHNMRFLELQTRLNRHNVQTLSCLFKSCPMLNILTVKIIDDQTSERRQWNKDLWDMSNSEIQYWESQAYELESFLNHLEFVEIHGFVECENEMSLAIFLLRHGKALIKMTLRSSFLCRDSLRRQMIRSQLTGFSMASSKAKISFH.

In terms of domain architecture, F-box spans 23 to 71 (VDRISNLPDSLNHQILLLLPLKSAAQASLLSKRWRSLFLSLPDLDFTSI). LRR repeat units follow at residues 148-172 (SQNLRALTLKSANLGFRLPPSSSAR), 175-200 (FQKLTSLSLSRVILHNQPCLSDFFTD), and 235-259 (SLQLEGLEVSGNKLQKLKVESCFYS). The region spanning 416–466 (YWESQAYELESFLNHLEFVEIHGFVECENEMSLAIFLLRHGKALIKMTLRS) is the FBD domain.

The sequence is that of Putative F-box/FBD/LRR-repeat protein At4g03220 from Arabidopsis thaliana (Mouse-ear cress).